A 255-amino-acid chain; its full sequence is tRNA (guanine-N(1)-)-methyltransferase (255 aa).

S-adenosyl-L-methionine-binding positions include G113 and 133-138; that span reads IGDYVL.

The protein belongs to the RNA methyltransferase TrmD family. In terms of assembly, homodimer.

The protein resides in the cytoplasm. It catalyses the reaction guanosine(37) in tRNA + S-adenosyl-L-methionine = N(1)-methylguanosine(37) in tRNA + S-adenosyl-L-homocysteine + H(+). In terms of biological role, specifically methylates guanosine-37 in various tRNAs. The chain is tRNA (guanine-N(1)-)-methyltransferase from Escherichia coli O81 (strain ED1a).